A 349-amino-acid polypeptide reads, in one-letter code: MAEEKVLEVKNLHVNFHTYAGDVKAIRNVSFDLEKGQTLAIVGESGSGKSVTTKTLMGLNAKNAEIPEGELLFKGRNLLDLKEEEWQKIRGNEISMIFQDPMTSLDPTMRIGKQIAEPLLKHNKGMSKADAMKRALELMQQVGIPDAEVHINDYPHQWSGGMRQRAVIAIALAADPEILIADEPTTALDVTIQAQIMHMMAELQERINSSIVFITHDLGVVAGFAHKVAVMYAGEIVEYGTVEEIFYNPQHPYTWGLLDSMPTVDSSVDRLVSIPGTPPDLLNPPKGDAFAARNKFALAIDFEEEPPYFEVSPTHFAKTWLLDPRAPKVTPSDNILARWKRWEELKGDK.

The ABC transporter domain maps to 7–258; sequence LEVKNLHVNF…PQHPYTWGLL (252 aa). An ATP-binding site is contributed by 43–50; it reads GESGSGKS.

It belongs to the ABC transporter superfamily. The complex is composed of two ATP-binding proteins (DppD and DppF), two transmembrane proteins (DppB and DppC) and a solute-binding protein (DppA).

It localises to the cell membrane. It carries out the reaction a dipeptide(out) + ATP + H2O = a dipeptide(in) + ADP + phosphate + H(+). Its function is as follows. Part of the ABC transporter DppABCDF involved in dipeptide transport. Responsible for energy coupling to the transport system. The sequence is that of Dipeptide transport ATP-binding protein DppD from Lactococcus lactis subsp. cremoris (strain MG1363).